A 208-amino-acid chain; its full sequence is MKHIHKIKNYAMVGGLGVMAVFALNACEQNSGQNNALNNTLQNSQKNGAFVIVEEQNDGSYKVLEEYPSEQTRVMLKDKNGQERLLSQEEIDELIKQEEVAIDSGQSQLTNPNGGGLGLGGAILASAAGAILGSYIGNKLFNNPNYQANSQRNYKSPQAYERSKNSFNSAKTGASGASKTSSGKSGFFGGGNSSQSTSTNRNTGSMGS.

The signal sequence occupies residues 1-26 (MKHIHKIKNYAMVGGLGVMAVFALNA). Cys27 carries N-palmitoyl cysteine lipidation. Cys27 is lipidated: S-diacylglycerol cysteine. Positions 148–208 (ANSQRNYKSP…TNRNTGSMGS (61 aa)) are disordered. Composition is skewed to low complexity over residues 169–185 (SAKT…SGKS) and 193–208 (SSQS…SMGS).

The protein belongs to the UPF0323 family.

Its subcellular location is the cell membrane. In Helicobacter hepaticus (strain ATCC 51449 / 3B1), this protein is UPF0323 lipoprotein HH_0014.